We begin with the raw amino-acid sequence, 95 residues long: Protein TusB (95 aa).

This sequence belongs to the DsrH/TusB family. As to quaternary structure, heterohexamer, formed by a dimer of trimers. The hexameric TusBCD complex contains 2 copies each of TusB, TusC and TusD. The TusBCD complex interacts with TusE.

It is found in the cytoplasm. Part of a sulfur-relay system required for 2-thiolation of 5-methylaminomethyl-2-thiouridine (mnm(5)s(2)U) at tRNA wobble positions. This is Protein TusB from Shigella dysenteriae serotype 1 (strain Sd197).